A 589-amino-acid chain; its full sequence is PTS system mannitol-specific EIICB component (589 aa).

Residues 1 to 25 are Cytoplasmic-facing; sequence MEEKVSLKVRVQKLGTSLSNMVMPN. In terms of domain architecture, PTS EIIC type-2 spans 14–347; the sequence is LGTSLSNMVM…LHADKSTEDS (334 aa). The chain crosses the membrane as a helical span at residues 26–47; sequence IGAFIAWGVLTALFIADGYLPN. Topologically, residues 48 to 51 are extracellular; it reads EQLA. The helical transmembrane segment at 52–72 threads the bilayer; that stretch reads TVVGPMLTYLLPILIGYTGGY. Residues 73–135 lie on the Cytoplasmic side of the membrane; it reads MIHGQRGAVV…PGFEMLVNNF (63 aa). Residues 136–157 form a helical membrane-spanning segment; the sequence is SAGLVGFALLLLAFYAIGPVVS. At 158-166 the chain is on the extracellular side; it reads TLTGAVGNG. Residues 167-187 traverse the membrane as a helical segment; sequence VEAIVNARLLPMANIIIEPAK. Topologically, residues 188–274 are cytoplasmic; that stretch reads VLFLNNALNH…VMMKPTLFLA (87 aa). A helical membrane pass occupies residues 275–294; the sequence is AMAGGISGTFTFQLLDAGLK. The Extracellular segment spans residues 295–316; that stretch reads SPASPGSIIAIMATAPKGVWPH. The chain crosses the membrane as a helical span at residues 317 to 338; sequence LNILLGVLVAAVVSFLIAALIL. At 339 to 589 the chain is on the cytoplasmic side; the sequence is HADKSTEDSL…YDKMAARMYK (251 aa). One can recognise a PTS EIIB type-2 domain in the interval 381-476; it reads EKIIFACDAG…SLTGASPIAE (96 aa). Catalysis depends on C387, which acts as the Phosphocysteine intermediate; for EIIB activity. C387 is subject to Phosphocysteine; by EIIA.

Homodimer.

The protein localises to the cell membrane. The enzyme catalyses D-mannitol(out) + N(pros)-phospho-L-histidyl-[protein] = D-mannitol 1-phosphate(in) + L-histidyl-[protein]. Functionally, the phosphoenolpyruvate-dependent sugar phosphotransferase system (sugar PTS), a major carbohydrate active transport system, catalyzes the phosphorylation of incoming sugar substrates concomitantly with their translocation across the cell membrane. The enzyme II CmtAB PTS system is involved in D-mannitol transport. This is PTS system mannitol-specific EIICB component (mtlA) from Streptococcus pneumoniae (strain ATCC BAA-255 / R6).